A 396-amino-acid chain; its full sequence is Subtilisin-like protease 5 (396 aa).

An N-terminal signal peptide occupies residues 1 to 20 (MTGFLTILSLSLAALSVTNA). A propeptide spanning residues 21–116 (AQILSVPQGA…VEPDAIIKQH (96 aa)) is cleaved from the precursor. In terms of domain architecture, Inhibitor I9 spans 37–114 (YIVVMKDDTS…AFVEPDAIIK (78 aa)). The 272-residue stretch at 125-396 (PWGLSRLSNR…SRLLYNGSGR (272 aa)) folds into the Peptidase S8 domain. Active-site charge relay system residues include Asp156 and His187. Residues Asn230 and Asn248 are each glycosylated (N-linked (GlcNAc...) asparagine). Ser342 serves as the catalytic Charge relay system. Residues 376–396 (PTIRNPGPDTTSRLLYNGSGR) form a disordered region. Asn392 is a glycosylation site (N-linked (GlcNAc...) asparagine).

This sequence belongs to the peptidase S8 family.

It localises to the secreted. In terms of biological role, secreted subtilisin-like serine protease with keratinolytic activity that contributes to pathogenicity. The sequence is that of Subtilisin-like protease 5 (SUB5) from Arthroderma gypseum (strain ATCC MYA-4604 / CBS 118893) (Microsporum gypseum).